The following is a 469-amino-acid chain: Light-independent protochlorophyllide reductase subunit N (469 aa).

[4Fe-4S] cluster-binding residues include cysteine 24, cysteine 49, and cysteine 109.

Belongs to the BchN/ChlN family. As to quaternary structure, protochlorophyllide reductase is composed of three subunits; ChlL, ChlN and ChlB. Forms a heterotetramer of two ChlB and two ChlN subunits. Requires [4Fe-4S] cluster as cofactor.

The enzyme catalyses chlorophyllide a + oxidized 2[4Fe-4S]-[ferredoxin] + 2 ADP + 2 phosphate = protochlorophyllide a + reduced 2[4Fe-4S]-[ferredoxin] + 2 ATP + 2 H2O. It participates in porphyrin-containing compound metabolism; chlorophyll biosynthesis (light-independent). Component of the dark-operative protochlorophyllide reductase (DPOR) that uses Mg-ATP and reduced ferredoxin to reduce ring D of protochlorophyllide (Pchlide) to form chlorophyllide a (Chlide). This reaction is light-independent. The NB-protein (ChlN-ChlB) is the catalytic component of the complex. The protein is Light-independent protochlorophyllide reductase subunit N of Synechocystis sp. (strain ATCC 27184 / PCC 6803 / Kazusa).